The following is a 398-amino-acid chain: Selection and upkeep of intraepithelial T-cells protein 8 (398 aa).

The signal sequence occupies residues 1–25 (MMKPEFSHFFGFCVYFLFLQVMASS). Residues 26–141 (EKLRVTTPTR…DVAIMNLNVT (116 aa)) enclose the Ig-like V-type domain. Residues 26–244 (EKLRVTTPTR…ANELFNQDYL (219 aa)) lie on the Extracellular side of the membrane. A disulfide bridge links cysteine 49 with cysteine 123. Residues asparagine 92 and asparagine 139 are each glycosylated (N-linked (GlcNAc...) asparagine). The Ig-like C1-type domain occupies 142-233 (AVGLETEIHV…TGEEKQTSII (92 aa)). Cysteine 163 and cysteine 217 are disulfide-bonded. A helical membrane pass occupies residues 245 to 265 (WVGIFPFSVLSLILFGVLPFI). Over 266 to 288 (NSFFRSQGCASGCLSKCLPVVTS) the chain is Cytoplasmic. The helical transmembrane segment at 289-309 (WPVQIVHFLVCSGVLFAVYLP) threads the bilayer. The Extracellular portion of the chain corresponds to 310–331 (HRYRVSLSDPQFPLYNNWITEL). Residues 332–352 (LIVILFLTICFVLPITVLLLI) traverse the membrane as a helical segment. Residues 353-398 (KLSPTCLAKWEKNKDDIMDSQLGLGKAREASTLYEEQSRKSWEQEK) lie on the Cytoplasmic side of the membrane.

It belongs to the SKINT family. As to expression, expressed in skin, thymus, testis and, to a lower extent, bladder, brain, heart, kidney, mammary gland, small intestine and uterus.

The protein localises to the membrane. May act by engaging a cell surface molecule on immature T-cells in the embryonic thymus. The protein is Selection and upkeep of intraepithelial T-cells protein 8 (Skint8) of Mus musculus (Mouse).